A 566-amino-acid polypeptide reads, in one-letter code: Berberine bridge enzyme-like D-2 (566 aa).

An N-terminal signal peptide occupies residues 1-33; it reads MKRNISMSLQRLLIILMMISFLFTSLLVPSVSA. A disulfide bond links cysteine 42 and cysteine 103. An N-linked (GlcNAc...) asparagine glycan is attached at asparagine 50. Residues 81–257 form the FAD-binding PCMH-type domain; sequence SKPKPTVIIV…YAWKIRLLKV (177 aa). Histidine 118 bears the Pros-8alpha-FAD histidine mark. Residues asparagine 364, asparagine 378, and asparagine 503 are each glycosylated (N-linked (GlcNAc...) asparagine).

The protein belongs to the oxygen-dependent FAD-linked oxidoreductase family. FAD is required as a cofactor.

The protein localises to the vacuole. It functions in the pathway alkaloid biosynthesis; nicotine biosynthesis. Functionally, involved in the biosynthesis of pyridine alkaloid natural products, leading mainly to the production of anabasine, anatabine, nicotine and nornicotine, effective deterrents against herbivores with antiparasitic and pesticide properties (neurotoxins); nornicotine serves as the precursor in the synthesis of the carcinogen compound N'-nitrosonornicotine (NNN). Catalyzes a late oxidation step subsequent to the pyridine ring condensation reaction in the biosynthesis of alkaloids. The chain is Berberine bridge enzyme-like D-2 from Nicotiana tabacum (Common tobacco).